The sequence spans 426 residues: Serine hydroxymethyltransferase 1 (426 aa).

(6S)-5,6,7,8-tetrahydrofolate contacts are provided by residues Leu-121 and 125–127; that span reads GHL. N6-(pyridoxal phosphate)lysine is present on Lys-230. 355-357 provides a ligand contact to (6S)-5,6,7,8-tetrahydrofolate; it reads SPF.

This sequence belongs to the SHMT family. As to quaternary structure, homodimer. Pyridoxal 5'-phosphate is required as a cofactor.

It localises to the cytoplasm. It carries out the reaction (6R)-5,10-methylene-5,6,7,8-tetrahydrofolate + glycine + H2O = (6S)-5,6,7,8-tetrahydrofolate + L-serine. It participates in one-carbon metabolism; tetrahydrofolate interconversion. Its pathway is amino-acid biosynthesis; glycine biosynthesis; glycine from L-serine: step 1/1. Catalyzes the reversible interconversion of serine and glycine with tetrahydrofolate (THF) serving as the one-carbon carrier. This reaction serves as the major source of one-carbon groups required for the biosynthesis of purines, thymidylate, methionine, and other important biomolecules. Also exhibits THF-independent aldolase activity toward beta-hydroxyamino acids, producing glycine and aldehydes, via a retro-aldol mechanism. This chain is Serine hydroxymethyltransferase 1, found in Hahella chejuensis (strain KCTC 2396).